The sequence spans 179 residues: Large ribosomal subunit protein uL5 (179 aa).

Belongs to the universal ribosomal protein uL5 family. As to quaternary structure, part of the 50S ribosomal subunit; part of the 5S rRNA/L5/L18/L25 subcomplex. Contacts the 5S rRNA and the P site tRNA. Forms a bridge to the 30S subunit in the 70S ribosome.

Functionally, this is one of the proteins that bind and probably mediate the attachment of the 5S RNA into the large ribosomal subunit, where it forms part of the central protuberance. In the 70S ribosome it contacts protein S13 of the 30S subunit (bridge B1b), connecting the 2 subunits; this bridge is implicated in subunit movement. Contacts the P site tRNA; the 5S rRNA and some of its associated proteins might help stabilize positioning of ribosome-bound tRNAs. This Parasynechococcus marenigrum (strain WH8102) protein is Large ribosomal subunit protein uL5.